A 170-amino-acid polypeptide reads, in one-letter code: Probable T4-type lysozyme 1 (170 aa).

Glutamate 13 serves as the catalytic Proton donor. Aspartate 22 serves as the catalytic Nucleophile.

It belongs to the glycosyl hydrolase 24 family.

It carries out the reaction Hydrolysis of (1-&gt;4)-beta-linkages between N-acetylmuramic acid and N-acetyl-D-glucosamine residues in a peptidoglycan and between N-acetyl-D-glucosamine residues in chitodextrins.. The sequence is that of Probable T4-type lysozyme 1 from Dictyostelium discoideum (Social amoeba).